Consider the following 22-residue polypeptide: EXSEQNPNILEIKPGDTVKVXT.

The disordered stretch occupies residues 1–22 (EXSEQNPNILEIKPGDTVKVXT).

In terms of assembly, heterotrimer of alpha, beta and gamma subunits. Heme b serves as cofactor.

Its subcellular location is the cytoplasm. May transfer electrons to the iron-sulfur centers of the beta subunit of chlorate reductase. The polypeptide is Chlorate reductase subunit gamma (Stutzerimonas chloritidismutans (Pseudomonas chloritidismutans)).